Reading from the N-terminus, the 173-residue chain is Co-chaperone protein HscB (173 aa).

Residues 2 to 74 (DYFTLFGLPV…LKRAEYMLSL (73 aa)) enclose the J domain.

Belongs to the HscB family. In terms of assembly, interacts with HscA and stimulates its ATPase activity. Interacts with IscU.

Co-chaperone involved in the maturation of iron-sulfur cluster-containing proteins. Seems to help targeting proteins to be folded toward HscA. This chain is Co-chaperone protein HscB, found in Serratia proteamaculans (strain 568).